We begin with the raw amino-acid sequence, 640 residues long: Chaperone protein DnaK (640 aa).

Thr199 carries the phosphothreonine; by autocatalysis modification. The segment covering 606-621 (QQAAGAGAQQADGTGK) has biased composition (low complexity). The interval 606-640 (QQAAGAGAQQADGTGKAADDGVVDAEFEEVKEDNK) is disordered. Residues 626–640 (GVVDAEFEEVKEDNK) show a composition bias toward acidic residues.

Belongs to the heat shock protein 70 family.

Its function is as follows. Acts as a chaperone. The sequence is that of Chaperone protein DnaK from Cellvibrio japonicus (strain Ueda107) (Pseudomonas fluorescens subsp. cellulosa).